We begin with the raw amino-acid sequence, 328 residues long: MINIAIDAMGGDFGEKPIIEGVLKALETKPFNAILVGNSKILKPLIPKKLEQYIQYEEASEIFSMNGNATDALKNKETTIYKAINLLKEKKVDAVVSAGHSGASMSLATLKLGRLKGISRPAIATLMPNIVNKTLLLDVGANTDCKAENLFQFAIMGEVYAREIMQIQKPRLALLSNGEEECKGNELTKESHQLMKKIPNFIGNAEGRDIFNGEIDVLVCDGFDGNVILKACEGVATAIFQLLKNEVKQSFISKIGALLMKPSFKKLKKHTDWQEYGGAPLLGVNGCVIISHGKSDSRAIKNAIFQAINFSQSHINKFIENELGKYNA.

Belongs to the PlsX family. In terms of assembly, homodimer. Probably interacts with PlsY.

The protein resides in the cytoplasm. The enzyme catalyses a fatty acyl-[ACP] + phosphate = an acyl phosphate + holo-[ACP]. The protein operates within lipid metabolism; phospholipid metabolism. In terms of biological role, catalyzes the reversible formation of acyl-phosphate (acyl-PO(4)) from acyl-[acyl-carrier-protein] (acyl-ACP). This enzyme utilizes acyl-ACP as fatty acyl donor, but not acyl-CoA. The sequence is that of Phosphate acyltransferase from Campylobacter jejuni subsp. jejuni serotype O:2 (strain ATCC 700819 / NCTC 11168).